Reading from the N-terminus, the 191-residue chain is Large ribosomal subunit protein uL6B (191 aa).

It belongs to the universal ribosomal protein uL6 family. In terms of assembly, component of the large ribosomal subunit (LSU). Mature yeast ribosomes consist of a small (40S) and a large (60S) subunit. The 40S small subunit contains 1 molecule of ribosomal RNA (18S rRNA) and 33 different proteins (encoded by 57 genes). The large 60S subunit contains 3 rRNA molecules (25S, 5.8S and 5S rRNA) and 46 different proteins (encoded by 81 genes).

It localises to the cytoplasm. Component of the ribosome, a large ribonucleoprotein complex responsible for the synthesis of proteins in the cell. The small ribosomal subunit (SSU) binds messenger RNAs (mRNAs) and translates the encoded message by selecting cognate aminoacyl-transfer RNA (tRNA) molecules. The large subunit (LSU) contains the ribosomal catalytic site termed the peptidyl transferase center (PTC), which catalyzes the formation of peptide bonds, thereby polymerizing the amino acids delivered by tRNAs into a polypeptide chain. The nascent polypeptides leave the ribosome through a tunnel in the LSU and interact with protein factors that function in enzymatic processing, targeting, and the membrane insertion of nascent chains at the exit of the ribosomal tunnel. The protein is Large ribosomal subunit protein uL6B of Saccharomyces cerevisiae (strain ATCC 204508 / S288c) (Baker's yeast).